Reading from the N-terminus, the 300-residue chain is MSYRELVAELPREHAEALSDALVELGALSVSVEDADADTPDEQPLFGEPGLVPERTAWQHSRVIALVDATQDPAVLLAAAANEAGLARTPRFELREVEEQDWVRLTQSQFEPIHIGEKIWVVPSWHDAPQPDALVLELDPGLAFGTGSHPTTRLCMEWLEQTVQPGQTVLDYGCGSGILAILAKKCGAGRVTGIDIDPQAVEAARHNSERNRADVTYGLPDDCPDGEFDIVVANILSNPLKLMASMLASKVKPGGRIALSGVLARQADEVASVYARYIDIAVWREHEGWVCLAGTRRESH.

Positions 152, 173, 195, and 234 each coordinate S-adenosyl-L-methionine.

Belongs to the methyltransferase superfamily. PrmA family.

It localises to the cytoplasm. It catalyses the reaction L-lysyl-[protein] + 3 S-adenosyl-L-methionine = N(6),N(6),N(6)-trimethyl-L-lysyl-[protein] + 3 S-adenosyl-L-homocysteine + 3 H(+). Functionally, methylates ribosomal protein L11. This is Ribosomal protein L11 methyltransferase from Burkholderia pseudomallei (strain K96243).